The sequence spans 358 residues: Aminomethyltransferase (358 aa).

This sequence belongs to the GcvT family. In terms of assembly, the glycine cleavage system is composed of four proteins: P, T, L and H.

It carries out the reaction N(6)-[(R)-S(8)-aminomethyldihydrolipoyl]-L-lysyl-[protein] + (6S)-5,6,7,8-tetrahydrofolate = N(6)-[(R)-dihydrolipoyl]-L-lysyl-[protein] + (6R)-5,10-methylene-5,6,7,8-tetrahydrofolate + NH4(+). In terms of biological role, the glycine cleavage system catalyzes the degradation of glycine. The chain is Aminomethyltransferase from Francisella philomiragia subsp. philomiragia (strain ATCC 25017 / CCUG 19701 / FSC 153 / O#319-036).